The sequence spans 1303 residues: Zinc finger CCCH domain-containing protein 4 (1303 aa).

Residues 1 to 33 (MEAAPGTPPPPPSESPPPPSPPPPSTPSPPPCS) show a composition bias toward pro residues. Residues 1-388 (MEAAPGTPPP…RDHDKPHQQS (388 aa)) are disordered. Residues 53-73 (DREDGELEEGELEDDGAEETQ) show a composition bias toward acidic residues. Residues Thr72 and Thr75 each carry the phosphothreonine modification. Residues Ser76, Ser92, and Ser94 each carry the phosphoserine modification. A compositionally biased stretch (basic and acidic residues) spans 80–99 (ERSRKEKGEKHHSDSDEEKS). A coiled-coil region spans residues 95–128 (DEEKSHRRLKRKRKKEREKEKRRSKKRRKSKHKR). A compositionally biased stretch (basic residues) spans 100-130 (HRRLKRKRKKEREKEKRRSKKRRKSKHKRHA). A compositionally biased stretch (acidic residues) spans 135-144 (DFSDFSDDSD). Tyr155 is subject to Phosphotyrosine. Residues 194-218 (EDYENEQYGEYEGDEEEDMGKEDYD) show a composition bias toward acidic residues. Over residues 219-235 (DFTKELNQYRRAKEGSS) the composition is skewed to basic and acidic residues. Positions 238–251 (RGSRGRGRGYRGRG) are enriched in basic residues. Residues 252 to 274 (SRGGSRGRGMGRGSRGRGRGSMG) are compositionally biased toward gly residues. A compositionally biased stretch (acidic residues) spans 278 to 304 (PEDEEDFYEEEMDYGESEEPMGDDDYD). Residues 305–321 (EYSKELNQYRRSKDSRG) are compositionally biased toward basic and acidic residues. Residues 323–346 (GLSRGRGRGSRGRGKGMGRGRGRG) show a composition bias toward basic residues. Over residues 358 to 369 (NDDEDFYDEDMG) the composition is skewed to acidic residues. A compositionally biased stretch (basic and acidic residues) spans 377–388 (RSRDHDKPHQQS). C3H1-type zinc fingers lie at residues 390 to 417 (KKGK…HDIE), 419 to 446 (PKKR…HGDF), and 447 to 470 (PCKL…HDPL). The segment covering 486 to 496 (AEAGAEDEKEV) has biased composition (acidic residues). Residues 486–571 (AEAGAEDEKE…HEPLSPQQLQ (86 aa)) form a disordered region. Pro residues-rich tracts occupy residues 507–529 (LPKP…PQAP) and 539–558 (GGPP…PQMP). Arg601 carries the asymmetric dimethylarginine modification. Positions 605-624 (PGGPPGPMGPGPNMGPPGPM) are enriched in pro residues. Disordered regions lie at residues 605-685 (PGGP…SGMM), 710-955 (GLLG…PRSQ), and 996-1288 (PPVP…ASLK). Residues 630 to 650 (PDMHPDMHPDMHPDMHADMHA) show a composition bias toward basic and acidic residues. Over residues 659-673 (NPGPPMGPGGPPMMP) the composition is skewed to pro residues. Composition is skewed to basic and acidic residues over residues 717–739 (DYGH…HPLE) and 782–795 (ERAR…KQDR). A coiled-coil region spans residues 767–800 (RALYLRIQQKQQEEEERARRLAESSKQDRENEEG). 2 positions are modified to phosphoserine: Ser807 and Ser808. The segment covering 815–843 (SSVTSILKTLRQQTSSRPPASVGELSSSG) has biased composition (polar residues). Basic and acidic residues predominate over residues 860–875 (ADPRLSRDPRLTRHVE). Residues Ser904, Ser907, and Ser908 each carry the phosphoserine modification. Over residues 904–918 (SLHSSPVGPSSSKGS) the composition is skewed to low complexity. Polar residues-rich tracts occupy residues 1028 to 1038 (GASTDSSTQGA) and 1053 to 1062 (VNATGSSAAP). The segment covering 1067-1084 (KPSDPRVRKAPTDPRLQK) has biased composition (basic and acidic residues). Residues 1097 to 1110 (PGPAEAPSPTASPS) show a composition bias toward low complexity. Ser1104 carries the phosphoserine modification. Residue Thr1106 is modified to Phosphothreonine. Phosphoserine is present on residues Ser1108, Ser1110, and Ser1114. Phosphothreonine is present on Thr1118. The segment covering 1129–1139 (GGLGQGGGGGQ) has biased composition (gly residues). Residues 1224–1234 (KAAAAPAATTA) show a composition bias toward low complexity. A compositionally biased stretch (pro residues) spans 1235 to 1245 (TPPPEGAPPQP). Residues 1259-1268 (VKQTPKTGSG) show a composition bias toward polar residues. A phosphoserine mark is found at Ser1269 and Ser1275.

Belongs to the suppressor of sable family. As to quaternary structure, interacts with WDR82.

It is found in the chromosome. Its function is as follows. RNA-binding protein that suppresses transcription of long non-coding RNAs (lncRNAs). LncRNAs are defined as transcripts more than 200 nucleotides that are not translated into protein. Together with WDR82, part of a transcription termination checkpoint that promotes transcription termination of lncRNAs and their subsequent degradation by the exosome. The transcription termination checkpoint is activated by the inefficiently spliced first exon of lncRNAs. The protein is Zinc finger CCCH domain-containing protein 4 of Homo sapiens (Human).